The following is a 219-amino-acid chain: Guanylate kinase (219 aa).

One can recognise a Guanylate kinase-like domain in the interval 15-194; that stretch reads GLMFVLSSPS…AFESVKAILR (180 aa). 22-29 provides a ligand contact to ATP; that stretch reads SPSGAGKT.

The protein belongs to the guanylate kinase family.

It localises to the cytoplasm. The enzyme catalyses GMP + ATP = GDP + ADP. Its function is as follows. Essential for recycling GMP and indirectly, cGMP. The protein is Guanylate kinase of Rhodopseudomonas palustris (strain BisB5).